Consider the following 435-residue polypeptide: MRRSSSVQRVALLSVHTSPLAQPGTGDAGGMNVYVVELATQLARRGVEVEVFTRRTSSEQPPVVETADGVRVRHVAAGPYEGLAKDDLPGQLCAFTAGMLHAEARHAERHYDLVHSHYWLSGQVGWLTADRWDVPLVHSMHTMAKVKNAALAEGDAPEPAGRVIGEQQVVEAADRLVANTDAERRELIDLYGADPAKVVVVPPGVDLATFAPAPGRAASRARLGVPADAEVLLFVGRIQPLKAPDLLVRATAELLREQPWRRSRLRVVVLGGPSGSGTAHPDSLADLVRSLDLEDVVRMAPPVARAELADHYRAADVVAVPSHNESFGLVALEAQACATPVVAAAVGGLRTAVLDDGAGAGTGEGTGLLVPDHTPRSWAAALRTLLDDPARRTAMGARAARRAQGFGWGATAEATLEVYRRAVQDRAAERGADPR.

H16 provides a ligand contact to 1D-myo-inositol 3-phosphate. UDP-N-acetyl-alpha-D-glucosamine contacts are provided by residues 22 to 23 (QP) and G30. Residues 27 to 32 (DAGGMN), K85, Y118, T142, and R162 each bind 1D-myo-inositol 3-phosphate. The UDP-N-acetyl-alpha-D-glucosamine site is built by R237, K242, and V303. Mg(2+)-binding residues include Y312, R313, and A315. UDP-N-acetyl-alpha-D-glucosamine-binding residues include E325 and E333. Position 339 (T339) interacts with Mg(2+).

It belongs to the glycosyltransferase group 1 family. MshA subfamily. As to quaternary structure, homodimer.

The catalysed reaction is 1D-myo-inositol 3-phosphate + UDP-N-acetyl-alpha-D-glucosamine = 1D-myo-inositol 2-acetamido-2-deoxy-alpha-D-glucopyranoside 3-phosphate + UDP + H(+). Catalyzes the transfer of a N-acetyl-glucosamine moiety to 1D-myo-inositol 3-phosphate to produce 1D-myo-inositol 2-acetamido-2-deoxy-glucopyranoside 3-phosphate in the mycothiol biosynthesis pathway. This is D-inositol 3-phosphate glycosyltransferase from Kineococcus radiotolerans (strain ATCC BAA-149 / DSM 14245 / SRS30216).